The following is a 427-amino-acid chain: Enolase (427 aa).

Glutamine 163 lines the (2R)-2-phosphoglycerate pocket. Catalysis depends on glutamate 205, which acts as the Proton donor. Mg(2+) contacts are provided by aspartate 242, glutamate 285, and aspartate 312. (2R)-2-phosphoglycerate contacts are provided by lysine 337, arginine 366, serine 367, and lysine 388. Catalysis depends on lysine 337, which acts as the Proton acceptor.

It belongs to the enolase family. The cofactor is Mg(2+).

The protein resides in the cytoplasm. It localises to the secreted. The protein localises to the cell surface. The enzyme catalyses (2R)-2-phosphoglycerate = phosphoenolpyruvate + H2O. The protein operates within carbohydrate degradation; glycolysis; pyruvate from D-glyceraldehyde 3-phosphate: step 4/5. Its function is as follows. Catalyzes the reversible conversion of 2-phosphoglycerate (2-PG) into phosphoenolpyruvate (PEP). It is essential for the degradation of carbohydrates via glycolysis. The polypeptide is Enolase (Burkholderia mallei (strain NCTC 10247)).